The chain runs to 448 residues: Chaperone SurA (448 aa).

An N-terminal signal peptide occupies residues 1 to 27; the sequence is MKKTLRFAAVAAGLVASLITVAPSASA. 2 consecutive PpiC domains span residues 185-288 and 301-399; these read QQDL…RLVD and IVQT…QVLG. A disordered region spans residues 230–249; the sequence is LAKSQSEADDAKKGGDLGFK.

The protein localises to the periplasm. It catalyses the reaction [protein]-peptidylproline (omega=180) = [protein]-peptidylproline (omega=0). Its function is as follows. Chaperone involved in the correct folding and assembly of outer membrane proteins. Recognizes specific patterns of aromatic residues and the orientation of their side chains, which are found more frequently in integral outer membrane proteins. May act in both early periplasmic and late outer membrane-associated steps of protein maturation. The polypeptide is Chaperone SurA (Burkholderia thailandensis (strain ATCC 700388 / DSM 13276 / CCUG 48851 / CIP 106301 / E264)).